A 389-amino-acid polypeptide reads, in one-letter code: Sulfate adenylyltransferase (389 aa).

This sequence belongs to the sulfate adenylyltransferase family.

It catalyses the reaction sulfate + ATP + H(+) = adenosine 5'-phosphosulfate + diphosphate. It participates in sulfur metabolism; hydrogen sulfide biosynthesis; sulfite from sulfate: step 1/3. The polypeptide is Sulfate adenylyltransferase (Microcystis aeruginosa (strain NIES-843 / IAM M-2473)).